A 343-amino-acid chain; its full sequence is Phosphate acyltransferase (343 aa).

Belongs to the PlsX family. Homodimer. Probably interacts with PlsY.

It is found in the cytoplasm. The catalysed reaction is a fatty acyl-[ACP] + phosphate = an acyl phosphate + holo-[ACP]. The protein operates within lipid metabolism; phospholipid metabolism. Its function is as follows. Catalyzes the reversible formation of acyl-phosphate (acyl-PO(4)) from acyl-[acyl-carrier-protein] (acyl-ACP). This enzyme utilizes acyl-ACP as fatty acyl donor, but not acyl-CoA. This Limosilactobacillus reuteri (strain DSM 20016) (Lactobacillus reuteri) protein is Phosphate acyltransferase.